The chain runs to 492 residues: Osmoregulated proline transporter OpuE (492 aa).

Helical transmembrane passes span 3–23 (IEIIISLGIYFIAMLLIGWYA), 40–60 (LGPFVTALSAGAADMSGWMLM), 62–82 (VPGAMFATGLSTLWLALGLTI), 125–145 (IVSALIIMIFFTLYTSSGMVS), 161–181 (GLFLTTAVVVLYTLFGGFLAV), 190–210 (AIMFAALVLVPIVAFTHVGGV), 224–244 (LLDIFKGASVISIISYLAWGL), 271–291 (IGMSWMIITVLGSVLTGLIGV), 314–334 (ILFHPLITGFLLSAILAAIMS), 365–385 (LVMIGRLSVLVIAVIAVLLSL), 394–414 (LVGYAWAGFGSAFGPAILLSL), 424–444 (ALAAMIVGAATVLIWITTGLA), and 449–469 (VYEIIPGFILSMIAGIIVSMI).

This sequence belongs to the sodium:solute symporter (SSF) (TC 2.A.21) family.

It is found in the cell membrane. The catalysed reaction is L-proline(in) + Na(+)(in) = L-proline(out) + Na(+)(out). Functionally, catalyzes the uptake of extracellular proline under high-osmolarity growth conditions. Essential for the use of proline present in the environment as an osmoprotectant. This Bacillus subtilis (strain 168) protein is Osmoregulated proline transporter OpuE.